Reading from the N-terminus, the 189-residue chain is Probable UbiX-like flavin prenyltransferase (189 aa).

Residues 9–11 (GAS), S36, 87–90 (SMKT), and R122 each bind FMN.

It belongs to the UbiX/PAD1 family. YclB subfamily. Homododecamer.

It carries out the reaction dimethylallyl phosphate + FMNH2 = prenylated FMNH2 + phosphate. Functionally, involved in the non-oxidative decarboxylation and detoxification of phenolic derivatives under anaerobic conditions. Flavin prenyltransferase that catalyzes the synthesis of the prenylated FMN cofactor (prenyl-FMN) for phenolic acid decarboxylase. In Sedimentibacter hydroxybenzoicus (Clostridium hydroxybenzoicum), this protein is Probable UbiX-like flavin prenyltransferase.